The following is a 213-amino-acid chain: Urease accessory protein UreE (213 aa).

The disordered stretch occupies residues 170–213 (EHHGRSHSHSHSHSHDHDHDHDHDHDHDHQHGPSCSHGHGHGHR). Residues 182–200 (HSHDHDHDHDHDHDHDHQH) are compositionally biased toward basic and acidic residues.

It belongs to the UreE family.

It is found in the cytoplasm. Involved in urease metallocenter assembly. Binds nickel. Probably functions as a nickel donor during metallocenter assembly. This Burkholderia thailandensis (strain ATCC 700388 / DSM 13276 / CCUG 48851 / CIP 106301 / E264) protein is Urease accessory protein UreE.